Here is a 30-residue protein sequence, read N- to C-terminus: uncharacterized protein (30 aa).

Residues 1-30 form a disordered region; sequence MHLSTLPNVPWPNRSFTTKRPPLPNMSFSW.

This is an uncharacterized protein from Saccharomyces cerevisiae (strain ATCC 204508 / S288c) (Baker's yeast).